The primary structure comprises 339 residues: MVREEITGSTQTLEWKCVESRVDSKRLYYGRFILSPLRKGQADTVGIALRRALLGEIEGTCITRAKFGNVPHEYSTIVGIEESIQEILLNLKEIVLRSNLYGVRDASICVKGPRYITAQDIILPPSVEIVDTTQPIANLREPVDFCIELQIKRDRAYHTELRKNSQDGSYPIDAVFMPVRNVNYSIFSCGNGNEKHEILFLEIWTNGSLTPKEALYEASRNLIDLFLPFLHTEEEGTSFEENKNRLTPPLLTFQKRFTNLKKNKKGIPLNCIFIDQLELPSRTYNCLKRANIHTLLDLLSKTEEDLMQINSFRMEDGKLIWDTLEKHLPIDLPKNKFSL.

The interval 1-233 (MVREEITGST…DLFLPFLHTE (233 aa)) is alpha N-terminal domain (alpha-NTD). The interval 264 to 339 (KKGIPLNCIF…IDLPKNKFSL (76 aa)) is alpha C-terminal domain (alpha-CTD).

The protein belongs to the RNA polymerase alpha chain family. In terms of assembly, in plastids the minimal PEP RNA polymerase catalytic core is composed of four subunits: alpha, beta, beta', and beta''. When a (nuclear-encoded) sigma factor is associated with the core the holoenzyme is formed, which can initiate transcription.

It is found in the plastid. It localises to the chloroplast. It carries out the reaction RNA(n) + a ribonucleoside 5'-triphosphate = RNA(n+1) + diphosphate. Its function is as follows. DNA-dependent RNA polymerase catalyzes the transcription of DNA into RNA using the four ribonucleoside triphosphates as substrates. In Zea mays (Maize), this protein is DNA-directed RNA polymerase subunit alpha.